Here is a 478-residue protein sequence, read N- to C-terminus: Antiviral innate immune response effector IFIT1 (478 aa).

TPR repeat units follow at residues 52 to 85 (VGIH…MQEE), 95 to 128 (LVTW…CKKL), 141 to 174 (IDCE…DPEN), 183 to 216 (ISAY…NPDN), 218 to 249 (YIKV…NMSS), and 251 to 284 (TYVF…TPTS). W147 lines the mRNA pocket. G190 contacts RNA. RNA contacts are provided by K259, H289, Q290, and K336. TPR repeat units lie at residues 305 to 339 (ATKG…KPTF), 340 to 373 (EVAH…KPVV), 378 to 412 (QDIH…EQAS), and 437 to 470 (LESL…AADF).

It belongs to the IFIT family. Component of an interferon-dependent multiprotein complex, at least composed of IFIT1, IFIT2 and IFIT3. Interacts (via TPR repeats 1-4) with RPL15. Interacts with STING1/MITA; could disrupt STING1 interaction with MAVS or TBK1, acting as a negative-feedback regulator of virus-triggered signaling. Interacts with EIF3E; this could be an alternative way to inhibit translation. Post-translationally, phosphorylated. ISGylated.

The protein resides in the cytoplasm. Functionally, plays a key role in the innate immune response as part of an interferon-dependent multiprotein complex, recognizing and sequestering viral RNAs that lack host-specific 2'-O-methylation at their 5' cap. By distinguishing these RNAs from host mRNAs, inhibits their translation by competing with the translation initiation factor eIF4E. Could also prevent viral replication through its interaction with DNA replication origin-binding protein E1 of several viruses. Causes the translocation of E1 from the nucleus to the cytoplasm and can also inhibit its helicase activity in vitro. Exhibits antiviral activity against many viruses from the Flaviviridae (West Nile virus, Dengue virus, hepatitis C virus), Coronaviridae (human 229E coronavirus, SARS-CoV-2 and SARS-CoV), Poxviridae (vaccinia virus) and Togaviridae (Sindbis virus) families. This Homo sapiens (Human) protein is Antiviral innate immune response effector IFIT1.